The chain runs to 529 residues: CTP synthase (529 aa).

An amidoligase domain region spans residues 1 to 267 (MKEAKFIFVT…DTQILEHFHL (267 aa)). Position 15 (S15) interacts with CTP. S15 is a UTP binding site. Residues 16-21 (SLGKGL) and D73 each bind ATP. Mg(2+)-binding residues include D73 and E141. CTP-binding positions include 148–150 (DIE), 188–193 (KTKPTQ), and K224. Residues 188 to 193 (KTKPTQ) and K224 contribute to the UTP site. Positions 292-529 (TVSIVGKYTE…SFVKAAIDKK (238 aa)) constitute a Glutamine amidotransferase type-1 domain. L-glutamine is bound at residue G354. C381 serves as the catalytic Nucleophile; for glutamine hydrolysis. Residues 382–385 (LGMQ), E405, and R459 each bind L-glutamine. Active-site residues include H504 and E506.

Belongs to the CTP synthase family. Homotetramer.

The catalysed reaction is UTP + L-glutamine + ATP + H2O = CTP + L-glutamate + ADP + phosphate + 2 H(+). The enzyme catalyses L-glutamine + H2O = L-glutamate + NH4(+). It catalyses the reaction UTP + NH4(+) + ATP = CTP + ADP + phosphate + 2 H(+). It participates in pyrimidine metabolism; CTP biosynthesis via de novo pathway; CTP from UDP: step 2/2. Its activity is regulated as follows. Allosterically activated by GTP, when glutamine is the substrate; GTP has no effect on the reaction when ammonia is the substrate. The allosteric effector GTP functions by stabilizing the protein conformation that binds the tetrahedral intermediate(s) formed during glutamine hydrolysis. Inhibited by the product CTP, via allosteric rather than competitive inhibition. Its function is as follows. Catalyzes the ATP-dependent amination of UTP to CTP with either L-glutamine or ammonia as the source of nitrogen. Regulates intracellular CTP levels through interactions with the four ribonucleotide triphosphates. The protein is CTP synthase of Wolbachia pipientis wMel.